The chain runs to 513 residues: Dye-decolorizing peroxidase msp1 (513 aa).

An N-terminal signal peptide occupies residues 1 to 20; sequence MKLFSASVFAAIIASHYASA. A propeptide spanning residues 21–55 is cleaved from the precursor; that stretch reads TAHIRAPNVKPRRTNSLLTAPPQQPPLPSAQQAAS. The interval 33 to 52 is disordered; the sequence is RTNSLLTAPPQQPPLPSAQQ. The active-site Proton acceptor is Asp228. His365 contacts heme.

Homodimer. The cofactor is heme b.

Its subcellular location is the secreted. It catalyses the reaction Reactive Blue 5 + 2 H2O2 = 2,2'-disulfonyl azobenzene + 3-[(4-amino-6-chloro-1,3,5-triazin-2-yl)amino]benzenesulfonate + phthalate + 2 H2O + 2 H(+). The enzyme catalyses 2 a phenolic donor + H2O2 = 2 a phenolic radical donor + 2 H2O. Functionally, manganese-independent peroxidase that is able to convert a large number of compounds, but its physiological substrate is not known. In addition to classic peroxidase substrates (e.g. 2,6-dimethoxyphenol), oxidizes dyes such as Reactive Blue 5. Also degrades beta-carotene. This Mycetinis scorodonius (Garlic mushroom) protein is Dye-decolorizing peroxidase msp1.